A 335-amino-acid chain; its full sequence is Nuclear distribution protein nudE homolog 1 (335 aa).

The self-association stretch occupies residues M1–I93. Residues W18 to K188 are a coiled coil. Residues E88–L156 form an interaction with PAFAH1B1 region. The interval Q167 to A290 is interaction with CENPF. The segment at A181–T246 is disordered. Residues T204–S214 show a composition bias toward polar residues. At S211 the chain carries Phosphoserine. Phosphothreonine is present on residues T215 and T228. S231 and S239 each carry phosphoserine. Phosphothreonine occurs at positions 243 and 246. C274 carries the S-palmitoyl cysteine; by ZDHHC2, ZDHHC3 and ZDHHC7 lipid modification. Residues Y279–C335 are disordered. At S282 the chain carries Phosphoserine. Residues K296–P305 are compositionally biased toward basic and acidic residues. At S309 the chain carries Phosphoserine. The span at S325–C335 shows a compositional bias: low complexity.

It belongs to the nudE family. As to quaternary structure, homodimer. Interacts with CNTRL, LIS1, dynein, SLMAP and TCP1. Interacts with CENPF, dynactin, tubulin gamma, PAFAH1B1, PCM1 and PCNT. Interacts with ZNF365. Interacts with GTP-bound RAB9A and RAB9B; the interaction leads to RAB9-dynein motor tethering. Interacts (via C-terminus) with MCRS1 (via C-terminus); phosphorylation of NDE1 inhibits the interaction. In terms of processing, phosphorylated in mitosis. Phosphorylated in vitro by CDC2. Phosphorylation at Thr-246 is essential for the G2/M transition. As to expression, expressed in the neuroepithelium throughout the developing brain, including the cerebral cortex and cerebellum.

The protein localises to the cytoplasm. It localises to the cytoskeleton. The protein resides in the microtubule organizing center. Its subcellular location is the centrosome. It is found in the chromosome. The protein localises to the centromere. It localises to the kinetochore. The protein resides in the spindle. Its subcellular location is the cleavage furrow. It is found in the cytoplasmic vesicle membrane. Its function is as follows. Required for centrosome duplication and formation and function of the mitotic spindle. Essential for the development of the cerebral cortex. May regulate the production of neurons by controlling the orientation of the mitotic spindle during division of cortical neuronal progenitors of the proliferative ventricular zone of the brain. Orientation of the division plane perpendicular to the layers of the cortex gives rise to two proliferative neuronal progenitors whereas parallel orientation of the division plane yields one proliferative neuronal progenitor and a postmitotic neuron. A premature shift towards a neuronal fate within the progenitor population may result in an overall reduction in the final number of neurons and an increase in the number of neurons in the deeper layers of the cortex. Acts as a RAB9A/B effector that tethers RAB9-associated late endosomes to the dynein motor for their retrograde transport to the trans-Golgi network. The chain is Nuclear distribution protein nudE homolog 1 from Homo sapiens (Human).